The chain runs to 315 residues: DNA-directed RNA polymerase subunit alpha (315 aa).

Residues methionine 1–threonine 228 are alpha N-terminal domain (alpha-NTD). The segment at lysine 245–glutamate 315 is alpha C-terminal domain (alpha-CTD).

This sequence belongs to the RNA polymerase alpha chain family. In terms of assembly, homodimer. The RNAP catalytic core consists of 2 alpha, 1 beta, 1 beta' and 1 omega subunit. When a sigma factor is associated with the core the holoenzyme is formed, which can initiate transcription.

The catalysed reaction is RNA(n) + a ribonucleoside 5'-triphosphate = RNA(n+1) + diphosphate. In terms of biological role, DNA-dependent RNA polymerase catalyzes the transcription of DNA into RNA using the four ribonucleoside triphosphates as substrates. This chain is DNA-directed RNA polymerase subunit alpha, found in Clostridium tetani (strain Massachusetts / E88).